The chain runs to 538 residues: Chaperonin GroEL (538 aa).

ATP-binding positions include 29-32, 86-90, Gly413, 476-478, and Asp492; these read TIGP, DGTTT, and NAA.

This sequence belongs to the chaperonin (HSP60) family. As to quaternary structure, forms a cylinder of 14 subunits composed of two heptameric rings stacked back-to-back. Interacts with the co-chaperonin GroES.

Its subcellular location is the cytoplasm. It carries out the reaction ATP + H2O + a folded polypeptide = ADP + phosphate + an unfolded polypeptide.. Together with its co-chaperonin GroES, plays an essential role in assisting protein folding. The GroEL-GroES system forms a nano-cage that allows encapsulation of the non-native substrate proteins and provides a physical environment optimized to promote and accelerate protein folding. The chain is Chaperonin GroEL from Staphylococcus aureus (strain bovine RF122 / ET3-1).